We begin with the raw amino-acid sequence, 188 residues long: Elongation factor P (188 aa).

Belongs to the elongation factor P family.

It localises to the cytoplasm. Its pathway is protein biosynthesis; polypeptide chain elongation. Functionally, involved in peptide bond synthesis. Stimulates efficient translation and peptide-bond synthesis on native or reconstituted 70S ribosomes in vitro. Probably functions indirectly by altering the affinity of the ribosome for aminoacyl-tRNA, thus increasing their reactivity as acceptors for peptidyl transferase. The chain is Elongation factor P from Rickettsia bellii (strain OSU 85-389).